The chain runs to 639 residues: UvrABC system protein C (639 aa).

The region spanning 20 to 97 (ERSGVYRMFD…IKKFQPKFNI (78 aa)) is the GIY-YIG domain. The 36-residue stretch at 207–242 (KELQENLSRKMEELSSQMRFEEAAEIRDRIKALSYV) folds into the UVR domain.

Belongs to the UvrC family. As to quaternary structure, interacts with UvrB in an incision complex.

It localises to the cytoplasm. Its function is as follows. The UvrABC repair system catalyzes the recognition and processing of DNA lesions. UvrC both incises the 5' and 3' sides of the lesion. The N-terminal half is responsible for the 3' incision and the C-terminal half is responsible for the 5' incision. In Rickettsia rickettsii (strain Iowa), this protein is UvrABC system protein C.